Here is a 1080-residue protein sequence, read N- to C-terminus: Presequence protease 2, chloroplastic/mitochondrial (1080 aa).

The N-terminal 84 residues, 1 to 84, are a transit peptide targeting the chloroplast and mitochondrion; sequence MLRSLTCSST…NGQFSRLSIR (84 aa). Zn(2+) is bound at residue His-161. Glu-164 functions as the Proton acceptor in the catalytic mechanism. His-165 is a Zn(2+) binding site. Glu-239 is an active-site residue. Position 261 (Glu-261) interacts with Zn(2+). Arg-704 contacts Mg(2+).

Belongs to the peptidase M16 family. PreP subfamily. In terms of assembly, homodimer. It depends on Zn(2+) as a cofactor. Requires Mg(2+) as cofactor. As to expression, expressed in leaves, flowers and roots, but not detected in siliques and shoots.

The protein localises to the plastid. It localises to the chloroplast stroma. Its subcellular location is the mitochondrion matrix. With respect to regulation, completely inhibited by the metal chelator orthophenanthroline. In terms of biological role, ATP-independent protease that degrades both mitochondrial and chloroplastic transit peptides after their cleavage. Also degrades other unstructured peptides. Specific for peptides in the range of 10 to 65 residues. Shows a preference for cleavage after small polar residues and before basic residues, but without any positional preference. The sequence is that of Presequence protease 2, chloroplastic/mitochondrial (PREP2) from Arabidopsis thaliana (Mouse-ear cress).